The sequence spans 236 residues: tRNA (guanine-N(7)-)-methyltransferase (236 aa).

Over residues 1-17 (MSERKSDPDRDDSERAF) the composition is skewed to basic and acidic residues. The disordered stretch occupies residues 1 to 23 (MSERKSDPDRDDSERAFFGRRKG). S-adenosyl-L-methionine-binding residues include Glu67, Glu92, Asp119, and Asp141. The active site involves Asp141. Substrate contacts are provided by Lys145 and Asp177.

This sequence belongs to the class I-like SAM-binding methyltransferase superfamily. TrmB family.

The enzyme catalyses guanosine(46) in tRNA + S-adenosyl-L-methionine = N(7)-methylguanosine(46) in tRNA + S-adenosyl-L-homocysteine. Its pathway is tRNA modification; N(7)-methylguanine-tRNA biosynthesis. Its function is as follows. Catalyzes the formation of N(7)-methylguanine at position 46 (m7G46) in tRNA. This is tRNA (guanine-N(7)-)-methyltransferase from Bradyrhizobium diazoefficiens (strain JCM 10833 / BCRC 13528 / IAM 13628 / NBRC 14792 / USDA 110).